Reading from the N-terminus, the 501-residue chain is Glycerol kinase (501 aa).

Thr-11 is a binding site for ADP. The ATP site is built by Thr-11, Thr-12, and Ser-13. A sn-glycerol 3-phosphate-binding site is contributed by Thr-11. ADP is bound at residue Arg-15. Positions 81, 82, 133, and 242 each coordinate sn-glycerol 3-phosphate. The glycerol site is built by Arg-81, Glu-82, Tyr-133, Asp-242, and Gln-243. 2 residues coordinate ADP: Thr-264 and Gly-307. 4 residues coordinate ATP: Thr-264, Gly-307, Gln-311, and Gly-409. Gly-409 and Asn-413 together coordinate ADP.

Belongs to the FGGY kinase family.

The enzyme catalyses glycerol + ATP = sn-glycerol 3-phosphate + ADP + H(+). Its pathway is polyol metabolism; glycerol degradation via glycerol kinase pathway; sn-glycerol 3-phosphate from glycerol: step 1/1. Inhibited by fructose 1,6-bisphosphate (FBP). Key enzyme in the regulation of glycerol uptake and metabolism. Catalyzes the phosphorylation of glycerol to yield sn-glycerol 3-phosphate. In Borrelia garinii subsp. bavariensis (strain ATCC BAA-2496 / DSM 23469 / PBi) (Borreliella bavariensis), this protein is Glycerol kinase.